We begin with the raw amino-acid sequence, 354 residues long: Short-chain dehydrogenase/reductase SAT2 (354 aa).

NADP(+) contacts are provided by I31, D85, R201, and V233.

It belongs to the short-chain dehydrogenases/reductases (SDR) family.

It functions in the pathway mycotoxin biosynthesis. Short-chain dehydrogenase/reductase; part of the satratoxin SC1 cluster involved in the biosynthesis of satratoxins, trichothecene mycotoxins that are associated with human food poisonings. Satratoxins are suggested to be made by products of multiple gene clusters (SC1, SC2 and SC3) that encode 21 proteins in all, including polyketide synthases, acetyltransferases, and other enzymes expected to modify the trichothecene skeleton. SC1 encodes 10 proteins, SAT1 to SAT10. The largest are SAT8, which encodes a putative polyketide synthase (PKS) with a conventional non-reducing architecture, and SAT10, a putative protein containing four ankyrin repeats and thus may be involved in protein scaffolding. The putative short-chain reductase SAT3 may assist the PKS in some capacity. SAT6 contains a secretory lipase domain and acts probably as a trichothecene esterase. SAT5 encodes a putative acetyltransferase, and so, with SAT6, may affect endogenous protection from toxicity. The probable transcription factor SAT9 may regulate the expression of the SC1 cluster. SC2 encodes proteins SAT11 to SAT16, the largest of which encodes the putative reducing PKS SAT13. SAT11 is a cytochrome P450 monooxygenase, while SAT14 and SAT16 are probable acetyltransferases. The SC2 cluster may be regulated by the transcription factor SAT15. SC3 is a small cluster that encodes 5 proteins, SAT17 to SAT21. SAT21 is a putative MFS-type transporter which may have a role in exporting secondary metabolites. The four other proteins putatively encoded in SC3 include the taurine hydroxylase-like protein SAT17, the O-methyltransferase SAT18, the acetyltransferase SAT19, and the Cys6-type zinc finger SAT20, the latter being probably involved in regulation of SC3 expression. In Stachybotrys chartarum (strain CBS 109288 / IBT 7711) (Toxic black mold), this protein is Short-chain dehydrogenase/reductase SAT2.